The chain runs to 413 residues: N-acylneuraminate cytidylyltransferase (413 aa).

It belongs to the CMP-NeuNAc synthase family. Requires Mg(2+) as cofactor. It depends on Mn(2+) as a cofactor.

It is found in the cytoplasm. It catalyses the reaction an N-acylneuraminate + CTP = a CMP-N-acyl-beta-neuraminate + diphosphate. Its function is as follows. Catalyzes the formation of CMP-N-acetylneuraminic acid (CMP-NeuNAc), which is essential for the formation of the capsule. This Streptococcus agalactiae serotype Ia (strain ATCC 27591 / A909 / CDC SS700) protein is N-acylneuraminate cytidylyltransferase (neuA).